The primary structure comprises 288 residues: Aminoglycoside N(3)-acetyltransferase VII (288 aa).

This sequence belongs to the antibiotic N-acetyltransferase family.

The catalysed reaction is a 2-deoxystreptamine antibiotic + acetyl-CoA = an N(3)-acetyl-2-deoxystreptamine antibiotic + CoA + H(+). In terms of biological role, resistance to paromomycin. The sequence is that of Aminoglycoside N(3)-acetyltransferase VII (aacC7) from Streptomyces paromomycinus (Streptomyces rimosus subsp. paromomycinus).